Consider the following 499-residue polypeptide: Hepatic triacylglycerol lipase (499 aa).

The signal sequence occupies residues 1-21; that stretch reads MGSPLCVPIFLAVCILIQSST. N-linked (GlcNAc...) asparagine glycosylation occurs at Asn-78. The active-site Nucleophile is the Ser-168. Asp-194 serves as the catalytic Charge relay system. Residues 254-277 form an essential for determining substrate specificity region; sequence CHFLELYKHIAQHGLNALSQTIKC. Residue His-279 is the Charge relay system of the active site. Residues 352 to 486 form the PLAT domain; that stretch reads YHYQFKIQFI…HPTQEKNFVR (135 aa). Residue Asn-397 is glycosylated (N-linked (GlcNAc...) asparagine).

This sequence belongs to the AB hydrolase superfamily. Lipase family. Homodimer.

The protein resides in the secreted. The enzyme catalyses a triacylglycerol + H2O = a diacylglycerol + a fatty acid + H(+). It catalyses the reaction a 1-acyl-sn-glycero-3-phosphocholine + H2O = sn-glycerol 3-phosphocholine + a fatty acid + H(+). It carries out the reaction a 1,2-diacyl-sn-glycero-3-phosphocholine + H2O = a 2-acyl-sn-glycero-3-phosphocholine + a fatty acid + H(+). The catalysed reaction is 1,2,3-tri-(9Z-octadecenoyl)-glycerol + H2O = di-(9Z)-octadecenoylglycerol + (9Z)-octadecenoate + H(+). The enzyme catalyses 1,2-di-(9Z-octadecenoyl)-sn-glycero-3-phosphocholine + H2O = (9Z-octadecenoyl)-sn-glycero-3-phosphocholine + (9Z)-octadecenoate + H(+). It catalyses the reaction 1,2,3-tributanoylglycerol + H2O = dibutanoylglycerol + butanoate + H(+). It carries out the reaction 1,2-dihexadecanoyl-sn-glycero-3-phosphocholine + H2O = hexadecanoyl-sn-glycero-3-phosphocholine + hexadecanoate + H(+). The catalysed reaction is 1,2-di-(9Z-octadecenoyl)-sn-glycerol + H2O = 2-(9Z-octadecenoyl)-glycerol + (9Z)-octadecenoate + H(+). The enzyme catalyses 1,2,3-tri-(9Z-octadecenoyl)-glycerol + H2O = 2,3-di-(9Z)-octadecenoyl-sn-glycerol + (9Z)-octadecenoate + H(+). It catalyses the reaction 1-(9Z-octadecenoyl)-sn-glycero-3-phospho-L-serine + H2O = sn-glycero-3-phospho-L-serine + (9Z)-octadecenoate + H(+). It carries out the reaction 1-hexadecanoyl-sn-glycero-3-phosphocholine + H2O = sn-glycerol 3-phosphocholine + hexadecanoate + H(+). The catalysed reaction is 1,3-di-(9Z-octadecenoyl)-glycerol + H2O = 3-(9Z-octadecenoyl)-sn-glycerol + (9Z)-octadecenoate + H(+). Functionally, catalyzes the hydrolysis of triglycerides and phospholipids present in circulating plasma lipoproteins, including chylomicrons, intermediate density lipoproteins (IDL), low density lipoproteins (LDL) of large size and high density lipoproteins (HDL), releasing free fatty acids (FFA) and smaller lipoprotein particles. Also exhibits lysophospholipase activity. Can hydrolyze both neutral lipid and phospholipid substrates but shows a greater binding affinity for neutral lipid substrates than phospholipid substrates. In native LDL, preferentially hydrolyzes the phosphatidylcholine species containing polyunsaturated fatty acids at sn-2 position. This Oryctolagus cuniculus (Rabbit) protein is Hepatic triacylglycerol lipase (LIPC).